The sequence spans 99 residues: NADH-quinone oxidoreductase subunit K (99 aa).

Helical transmembrane passes span 3–23 (PANY…GVLV), 28–48 (IVVF…LVTF), and 59–79 (IMAF…LAII).

This sequence belongs to the complex I subunit 4L family. In terms of assembly, NDH-1 is composed of 14 different subunits. Subunits NuoA, H, J, K, L, M, N constitute the membrane sector of the complex.

It is found in the cell membrane. The enzyme catalyses a quinone + NADH + 5 H(+)(in) = a quinol + NAD(+) + 4 H(+)(out). NDH-1 shuttles electrons from NADH, via FMN and iron-sulfur (Fe-S) centers, to quinones in the respiratory chain. The immediate electron acceptor for the enzyme in this species is believed to be a menaquinone. Couples the redox reaction to proton translocation (for every two electrons transferred, four hydrogen ions are translocated across the cytoplasmic membrane), and thus conserves the redox energy in a proton gradient. The polypeptide is NADH-quinone oxidoreductase subunit K (Frankia casuarinae (strain DSM 45818 / CECT 9043 / HFP020203 / CcI3)).